The chain runs to 59 residues: MNLQFLFIFIAFCVMLFAQIVTAKPVEAEVAQPKLYQRGEGGNGMEPIPEDVLNEALNA.

The first 23 residues, 1 to 23, serve as a signal peptide directing secretion; that stretch reads MNLQFLFIFIAFCVMLFAQIVTA.

In terms of assembly, interacts with human F2 (thrombin). Salivary gland (at protein level).

It is found in the secreted. Its function is as follows. Anticoagulant protein that acts as a competitive inhibitor of host thrombin. Inhibits thrombin-mediated host platelet aggregation. This Xenopsylla cheopis (Oriental rat flea) protein is Salivary thrombin inhibitor XC-43.